The following is a 466-amino-acid chain: Integrator complex subunit 12 (466 aa).

A disordered region spans residues 41 to 101; the sequence is KGNDSVYRPQ…EAEKRSADKM (61 aa). The span at 69–84 shows a compositional bias: low complexity; that stretch reads KASSSTPSSSMLSKPL. The segment covering 85–101 has biased composition (basic and acidic residues); sequence TSEKLKKEAEKRSADKM. The PHD-type zinc-finger motif lies at 156–212; that stretch reads GLACVVCRQMTVFSGNQLVECQECHNLYHQDCHKPQVTDKDVNDPRLVWYCARCTRQ. 2 disordered regions span residues 216-251 and 311-466; these read MAQK…ELKA and GTSS…KLKK. Composition is skewed to polar residues over residues 218–233 and 311–329; these read QKNQ…SAVS and GTSS…SVQK. A compositionally biased stretch (low complexity) spans 338–373; it reads PSKPGSVSKSGSGGSSSSSTIPIKPLPPLILGKTGL. Polar residues predominate over residues 374 to 386; that stretch reads SRSMSSDNVSKTG. Positions 392-423 are enriched in low complexity; the sequence is PSSAGSVSSLSSQLGSNNGSSSAAGSNVTSSN. The span at 453–466 shows a compositional bias: basic residues; that stretch reads QMVKKKAAQKKLKK.

It belongs to the Integrator subunit 12 family. In terms of assembly, component of the Integrator complex, composed of core subunits INTS1, INTS2, INTS3, INTS4, INTS5, INTS6, INTS7, INTS8, INTS9/RC74, INTS10, INTS11/CPSF3L, INTS12, INTS13, INTS14 and INTS15. The core complex associates with protein phosphatase 2A subunits PPP2CA and PPP2R1A, to form the Integrator-PP2A (INTAC) complex.

The protein resides in the nucleus. In terms of biological role, component of the integrator complex, a multiprotein complex that terminates RNA polymerase II (Pol II) transcription in the promoter-proximal region of genes. The integrator complex provides a quality checkpoint during transcription elongation by driving premature transcription termination of transcripts that are unfavorably configured for transcriptional elongation: the complex terminates transcription by (1) catalyzing dephosphorylation of the C-terminal domain (CTD) of Pol II subunit POLR2A/RPB1 and SUPT5H/SPT5, (2) degrading the exiting nascent RNA transcript via endonuclease activity and (3) promoting the release of Pol II from bound DNA. The integrator complex is also involved in terminating the synthesis of non-coding Pol II transcripts, such as enhancer RNAs (eRNAs), small nuclear RNAs (snRNAs), telomerase RNAs and long non-coding RNAs (lncRNAs). The protein is Integrator complex subunit 12 (ints12) of Xenopus tropicalis (Western clawed frog).